The following is a 353-amino-acid chain: UPF0283 membrane protein YcjF (353 aa).

The next 3 helical transmembrane spans lie at 70 to 90, 100 to 120, and 213 to 233; these read MVMGGLALFGASVVGQGVQWT, VALGGCAAGALIIGAGVGSVV, and ESTLMIAVSPLALVDMAFIAW.

This sequence belongs to the UPF0283 family.

It localises to the cell inner membrane. The sequence is that of UPF0283 membrane protein YcjF from Escherichia coli O127:H6 (strain E2348/69 / EPEC).